Here is a 512-residue protein sequence, read N- to C-terminus: MDTTTAKQASTKFVVLGLLLGILMSAMDNTIVATAMGNIVADLGSFDKFAWVTASYMVAVMAGMPIYGKLSDMYGRKRFFLFGLIFFLIGSALCGIAQTMNQLIIFRAIQGIGGGALLPIAFTIIFDLFPPEKRGKMSGMFGAVFGLSSVLGPLLGAIITDSISWHWVFYINVPIGALSLFFIIRYYKESLEHRKQKIDWGGAITLVVSIVCLMFALELGGKTYDWNSIQIIGLFIVFAVFFIAFFIVERKAEEPIISFWMFKNRLFATAQILAFLYGGTFIILAVFIPIFVQAVYGSSATSAGFILTPMMIGSVIGSMIGGIFQTKASFRNLMLISVIAFFIGMLLLSNMTPDTARVWLTVFMMISGFGVGFNFSLLPAASMNDLEPRFRGTANSTNSFLRSFGMTLGVTIFGTVQTNVFTNKLNDAFSGMKGSAGSGAAQNIGDPQEIFQAGTRSQIPDAILNRIIDAMSSSITYVFLLALIPIVLAAVTILFMGKARVKTTAEMTKKAN.

A run of 14 helical transmembrane segments spans residues 13 to 33 (FVVLGLLLGILMSAMDNTIVA), 48 to 68 (KFAWVTASYMVAVMAGMPIYG), 79 to 99 (FFLFGLIFFLIGSALCGIAQT), 109 to 129 (IQGIGGGALLPIAFTIIFDLF), 139 to 159 (GMFGAVFGLSSVLGPLLGAII), 163 to 183 (ISWHWVFYINVPIGALSLFFI), 200 to 220 (WGGAITLVVSIVCLMFALELG), 228 to 248 (SIQIIGLFIVFAVFFIAFFIV), 272 to 292 (ILAFLYGGTFIILAVFIPIFV), 304 to 324 (GFILTPMMIGSVIGSMIGGIF), 333 to 353 (LMLISVIAFFIGMLLLSNMTP), 358 to 378 (VWLTVFMMISGFGVGFNFSLL), 399 to 421 (SFLRSFGMTLGVTIFGTVQTNVF), and 475 to 495 (ITYVFLLALIPIVLAAVTILF).

It belongs to the major facilitator superfamily. EmrB family.

Its subcellular location is the cell membrane. Its function is as follows. Confers resistance to puromycin, tosufloxacin and norfloxacin. This chain is Multidrug resistance protein 3 (bmr3), found in Bacillus subtilis (strain 168).